Consider the following 146-residue polypeptide: Hemoglobin subunit beta (146 aa).

Valine 1 carries the N-acetylvaline modification. Residues 2-146 (HLTPDEKNAV…VANALAHKYH (145 aa)) form the Globin domain. The residue at position 12 (threonine 12) is a Phosphothreonine. At serine 44 the chain carries Phosphoserine. N6-acetyllysine is present on lysine 59. A heme b-binding site is contributed by histidine 63. Lysine 82 is subject to N6-acetyllysine. Heme b is bound at residue histidine 92. Cysteine 93 is subject to S-nitrosocysteine. Lysine 144 bears the N6-acetyllysine mark.

The protein belongs to the globin family. As to quaternary structure, heterotetramer of two alpha chains and two beta chains. As to expression, red blood cells.

Its function is as follows. Involved in oxygen transport from the lung to the various peripheral tissues. In Piliocolobus badius (Western red colobus), this protein is Hemoglobin subunit beta (HBB).